Here is a 179-residue protein sequence, read N- to C-terminus: Alkyl hydroperoxide reductase AhpD (179 aa).

The Proton donor role is filled by cysteine 130. Cysteine 130 and cysteine 133 are joined by a disulfide. Cysteine 133 serves as the catalytic Cysteine sulfenic acid (-SOH) intermediate.

This sequence belongs to the AhpD family. In terms of assembly, homotrimer.

The catalysed reaction is N(6)-[(R)-dihydrolipoyl]-L-lysyl-[lipoyl-carrier protein] + a hydroperoxide = N(6)-[(R)-lipoyl]-L-lysyl-[lipoyl-carrier protein] + an alcohol + H2O. Its function is as follows. Antioxidant protein with alkyl hydroperoxidase activity. Required for the reduction of the AhpC active site cysteine residues and for the regeneration of the AhpC enzyme activity. This chain is Alkyl hydroperoxide reductase AhpD, found in Rhodococcus erythropolis (strain PR4 / NBRC 100887).